A 230-amino-acid polypeptide reads, in one-letter code: Phosphatidate cytidylyltransferase (230 aa).

6 helical membrane passes run 33–53 (FVIAILWCKPLFYILMILVGT), 67–87 (IPDLLIGLIIIPIPISLLIFL), 95–115 (WLIMLYFCIMWSVDTFAMIGG), 133–153 (WSGLVTGVLSAGLVAVLVSFI), 167–187 (IYLFIISCILALIAQLSDLFI), and 206–226 (HGGVLDRFDSIILTTLILFLM).

Belongs to the CDS family.

The protein localises to the cell membrane. The enzyme catalyses a 1,2-diacyl-sn-glycero-3-phosphate + CTP + H(+) = a CDP-1,2-diacyl-sn-glycerol + diphosphate. It participates in phospholipid metabolism; CDP-diacylglycerol biosynthesis; CDP-diacylglycerol from sn-glycerol 3-phosphate: step 3/3. The chain is Phosphatidate cytidylyltransferase (cdsA) from Rickettsia conorii (strain ATCC VR-613 / Malish 7).